The sequence spans 763 residues: Protein translocase subunit SecA 2 (763 aa).

Residues glutamine 83, 101–105 (GEGKT), and aspartate 490 contribute to the ATP site.

Belongs to the SecA family. Monomer and homodimer. Part of the essential Sec protein translocation apparatus which comprises SecA, SecYEG and auxiliary proteins SecDF. Other proteins may also be involved.

Its subcellular location is the cell membrane. It is found in the cytoplasm. The catalysed reaction is ATP + H2O + cellular proteinSide 1 = ADP + phosphate + cellular proteinSide 2.. Part of the Sec protein translocase complex. Interacts with the SecYEG preprotein conducting channel. Has a central role in coupling the hydrolysis of ATP to the transfer of proteins into and across the cell membrane, serving as an ATP-driven molecular motor driving the stepwise translocation of polypeptide chains across the membrane. This Corynebacterium glutamicum (strain ATCC 13032 / DSM 20300 / JCM 1318 / BCRC 11384 / CCUG 27702 / LMG 3730 / NBRC 12168 / NCIMB 10025 / NRRL B-2784 / 534) protein is Protein translocase subunit SecA 2.